Here is a 103-residue protein sequence, read N- to C-terminus: Potassium voltage-gated channel subfamily E member 3 (103 aa).

N-linked (GlcNAc...) asparagine glycans are attached at residues Asn-5, Asn-22, and Asn-41. Positions 32 to 53 are disordered; it reads RPGPGLGPDNQTEERRASLPGR. Basic and acidic residues predominate over residues 43-53; that stretch reads TEERRASLPGR. Residues 57–77 form a helical membrane-spanning segment; sequence SYMYILFVMFLFAVTVGSLIL. An interaction with KCNQ1 region spans residues 68–79; it reads FAVTVGSLILGY. Residues 78 to 103 are Cytoplasmic-facing; sequence GYTRSRKVDKRSDPYHVYIKNRVSMI.

Belongs to the potassium channel KCNE family. In terms of assembly, interacts with KCNB1. Interacts with KCNC2. Associates with KCNC4/Kv3.4. Interacts with KCNQ1; associates with a KCNQ1:KCNE3 stoichiometry of 4:4; produces a current with nearly instantaneous activation with a linear current-voltage relationship and alters membrane raft localization; affects KCNQ1 structure and gating properties. In terms of tissue distribution, expressed in hippocampal neurons (at protein level). Widely expressed with highest levels in kidney and moderate levels in small intestine.

It is found in the cell membrane. Its subcellular location is the cytoplasm. The protein localises to the perikaryon. It localises to the cell projection. The protein resides in the dendrite. It is found in the membrane raft. Functionally, ancillary protein that functions as a regulatory subunit of the voltage-gated potassium (Kv) channel complex composed of pore-forming and potassium-conducting alpha subunits and of regulatory beta subunits. KCNE3 beta subunit modulates the gating kinetics and enhances stability of the channel complex. Alters the gating of the delayed rectifier Kv channel containing KCNB1 alpha subunit. Associates with KCNC4/Kv3.4 alpha subunit to form the subthreshold Kv channel in skeletal muscle and to establish the resting membrane potential (RMP) in muscle cells. Association with KCNQ1/KCLQT1 alpha subunit may form the intestinal cAMP-stimulated potassium channel involved in chloride secretion that produces a current with nearly instantaneous activation with a linear current-voltage relationship. The sequence is that of Potassium voltage-gated channel subfamily E member 3 from Homo sapiens (Human).